Reading from the N-terminus, the 255-residue chain is Geranylgeranylglyceryl phosphate synthase (255 aa).

Mg(2+)-binding residues include Asp-26 and Ser-55. Sn-glycerol 1-phosphate is bound by residues 174–180 (YLEAGSG), 205–206 (GG), and 227–228 (GT).

The protein belongs to the GGGP/HepGP synthase family. Group II subfamily. Requires Mg(2+) as cofactor.

It is found in the cytoplasm. The enzyme catalyses sn-glycerol 1-phosphate + (2E,6E,10E)-geranylgeranyl diphosphate = sn-3-O-(geranylgeranyl)glycerol 1-phosphate + diphosphate. The protein operates within membrane lipid metabolism; glycerophospholipid metabolism. In terms of biological role, prenyltransferase that catalyzes the transfer of the geranylgeranyl moiety of geranylgeranyl diphosphate (GGPP) to the C3 hydroxyl of sn-glycerol-1-phosphate (G1P). This reaction is the first ether-bond-formation step in the biosynthesis of archaeal membrane lipids. In Thermococcus sibiricus (strain DSM 12597 / MM 739), this protein is Geranylgeranylglyceryl phosphate synthase.